A 231-amino-acid chain; its full sequence is Eukaryotic translation initiation factor 4E-1 (231 aa).

2 EIF4G-binding regions span residues 56–59 and 66–102; these read HPLE and FDNP…NNIH. Residues 74–79, Lys106, and 124–125 each bind mRNA; these read RQTAWG and WE. Cysteines 129 and 167 form a disulfide. Residues 150-159 form an EIF4G-binding region; the sequence is YTLLAMIGHQ. MRNA contacts are provided by residues 174 to 179 and 219 to 223; these read RAKGEK and KRLDR.

This sequence belongs to the eukaryotic initiation factor 4E family. As to quaternary structure, EIF4F is a multi-subunit complex, the composition of which varies with external and internal environmental conditions. It is composed of at least EIF4A, EIF4E and EIF4G. EIF4E is also known to interact with other partners. In higher plants two isoforms of EIF4F have been identified, named isoform EIF4F and isoform EIF(iso)4F. Isoform EIF4F has subunits p220 and p26, whereas isoform EIF(iso)4F has subunits p82 and p28. In terms of assembly, (Microbial infection) Interacts with potyvirus viral genome-linked protein (VPg); mostly with tobacco etch virus (TEV-HAT) VPg and, to a lower extent, with potato virus Y (PVY-LYE84 and PVY-LYE90) and pepper mottle virus (PepMoV) VPg. Post-translationally, according to the redox status, the Cys-129-Cys-167 disulfide bridge may have a role in regulating protein function by affecting its ability to bind capped mRNA.

Its subcellular location is the nucleus. It is found in the cytoplasm. Functionally, component of the protein complex eIF4F, which is involved in the recognition of the mRNA cap, ATP-dependent unwinding of 5'-terminal secondary structure and recruitment of mRNA to the ribosome. Recognizes and binds the 7-methylguanosine-containing mRNA cap during an early step in the initiation of protein synthesis and facilitates ribosome binding by inducing the unwinding of the mRNAs secondary structures. Key component of recessive resistance to potyviruses. (Microbial infection) Susceptibility host factor required for viral infection (e.g. potato virus Y (PVY), pepper mottle virus (PepMoV) and tobacco etch virus (TEV)) by recruiting viral RNAs to the host ribosomal complex via an interaction with viral genome-linked protein (VPg). The polypeptide is Eukaryotic translation initiation factor 4E-1 (Solanum lycopersicum (Tomato)).